We begin with the raw amino-acid sequence, 624 residues long: MLSRVARCSRTLNQVTRNGQSGLFSAVLRTSIRQNSTDSPASNNANEIYTKLSDTKDPQRNQFFQYTWGSWLTNDKSKKKQRETTFSIEGLTLFIDRINQLESKLAQPKSLEGAFVLANNKELLGSTKDKVIVRSIASIHEGKHHRVYKITLNTGKELVLRIPYKLDSDVAIASKLKSEVATTDFLKLKLGLNVPRVLAYGVDSNNEIKSPFILQEFISGELLMKKWHPLLPDSEETNKRLHEVIDPIAQFQNKILSVTFNKFGSLYFHDDVEGSLQNDVPYEGETDSALSNRWRIGPSVERQFTRNKNKLQQSIIDQYNGPWDASNPTAVLESVADIELENAKSKLSLINADAGANENDRALITKQIKTFENLKKISPQLINDKSKSIMNVEELFKPRLYIPDLDPLNVIQHSETENYFIDFEGSTIKPFILTSYPKFVAYQGAKIYNLEEDVPGYKEMEELEKQQYEFMYYKTRNERMWEFELNKYRHDLIAIASPHIKVLKSPYLQALDVKNGKDYLYVEGSIVQLQAMWEAYVANELVNSKDTKFPIEYTAEYLDQHQQELSDYQLETVSSPFSATGGWIPQDMFDTLKAQGILVETKDGNYKVETEKVLENPPAQPEEK.

A mitochondrion-targeting transit peptide spans 1-34 (MLSRVARCSRTLNQVTRNGQSGLFSAVLRTSIRQ).

It belongs to the AIM9 family.

The protein localises to the mitochondrion. In Candida albicans (strain SC5314 / ATCC MYA-2876) (Yeast), this protein is Altered inheritance of mitochondria protein 9, mitochondrial (AIM9).